We begin with the raw amino-acid sequence, 344 residues long: Zinc metalloproteinase nas-6 (344 aa).

The signal sequence occupies residues 1–19 (MLDHVLLLTYCLVSTVVRS). A Peptidase M12A domain is found at 72 to 266 (NALKNKQLTW…VKINKLYSCK (195 aa)). 5 cysteine pairs are disulfide-bonded: Cys-114–Cys-265, Cys-135–Cys-154, Cys-300–Cys-334, Cys-307–Cys-327, and Cys-314–Cys-331. His-162 lines the Zn(2+) pocket. Residue Glu-163 is part of the active site. Residues His-166 and His-172 each contribute to the Zn(2+) site. The region spanning 300 to 334 (CVDHFADCPHFAQYCTRASFFFVMKSYCPFTCKHC) is the ShKT domain.

Zn(2+) is required as a cofactor. Expressed in pharyngeal and body wall muscles, intestine, hypodermis and pharyngeal mc2 cells.

The protein localises to the secreted. Functionally, metalloprotease. The protein is Zinc metalloproteinase nas-6 (nas-6) of Caenorhabditis elegans.